Consider the following 677-residue polypeptide: Protein PALS1 (677 aa).

The tract at residues 1–347 is required for the correct localization of PALS1 and PATJ at cell-cell contacts and the normal formation of tight junctions and adherens junctions; that stretch reads MTTSHMNGYV…AQIKSPPIKE (347 aa). The disordered stretch occupies residues 39–81; it reads ELGARTLPVRRSAQLEKIRQQQEDRRRREEEGRSRQELDLNSS. The segment covering 51–76 has biased composition (basic and acidic residues); that stretch reads AQLEKIRQQQEDRRRREEEGRSRQEL. 2 consecutive L27 domains span residues 121–178 and 180–236; these read ALLE…NRPS and PYPL…MQLE. A PDZ domain is found at 258–338; the sequence is IVRIEKAKDI…VLSFVLIPSA (81 aa). In terms of domain architecture, SH3 spans 347–419; sequence ETVVHVKAHF…PGKSFQQQRE (73 aa). Residues 481–662 enclose the Guanylate kinase-like domain; the sequence is KRPIALIGPP…SYQELLRLIN (182 aa). Residue 488 to 495 participates in ATP binding; the sequence is GPPNCGQN. Positions 506-526 are disordered; the sequence is PDRFAGPVPHTTRSRRDAEAN.

Belongs to the MAGUK family. Expressed in the retina and in the neural tube.

It localises to the apical cell membrane. Its subcellular location is the cell junction. The protein resides in the tight junction. Plays a role in tight junction biogenesis and in the establishment of cell polarity in epithelial cells. Also involved in adherens junction biogenesis. Required for polarized epithelial organization, cell-cell adhesion and remodeling of myocardial cells during heart tube elongation during embryogenesis. Functions in cellular patterning of the retina and development of the retinal pigmented epithelium. Also required for embryo body axis specification. The sequence is that of Protein PALS1 (pals1a) from Danio rerio (Zebrafish).